We begin with the raw amino-acid sequence, 168 residues long: 2-C-methyl-D-erythritol 2,4-cyclodiphosphate synthase (168 aa).

2 residues coordinate a divalent metal cation: Asp11 and His13. Residues 11–13 (DVH) and 41–42 (HS) contribute to the 4-CDP-2-C-methyl-D-erythritol 2-phosphate site. His49 is an a divalent metal cation binding site. 4-CDP-2-C-methyl-D-erythritol 2-phosphate is bound by residues 63–65 (DIG), 68–72 (FPDTD), 139–142 (TTTE), Phe146, and Arg149.

Belongs to the IspF family. As to quaternary structure, homotrimer. It depends on a divalent metal cation as a cofactor.

It carries out the reaction 4-CDP-2-C-methyl-D-erythritol 2-phosphate = 2-C-methyl-D-erythritol 2,4-cyclic diphosphate + CMP. It functions in the pathway isoprenoid biosynthesis; isopentenyl diphosphate biosynthesis via DXP pathway; isopentenyl diphosphate from 1-deoxy-D-xylulose 5-phosphate: step 4/6. Functionally, involved in the biosynthesis of isopentenyl diphosphate (IPP) and dimethylallyl diphosphate (DMAPP), two major building blocks of isoprenoid compounds. Catalyzes the conversion of 4-diphosphocytidyl-2-C-methyl-D-erythritol 2-phosphate (CDP-ME2P) to 2-C-methyl-D-erythritol 2,4-cyclodiphosphate (ME-CPP) with a corresponding release of cytidine 5-monophosphate (CMP). This chain is 2-C-methyl-D-erythritol 2,4-cyclodiphosphate synthase, found in Psychrobacter cryohalolentis (strain ATCC BAA-1226 / DSM 17306 / VKM B-2378 / K5).